Consider the following 319-residue polypeptide: Tetrahydromethanopterin S-methyltransferase subunit H (319 aa).

This sequence belongs to the MtrH family. The complex is composed of 8 subunits; MtrA, MtrB, MtrC, MtrD, MtrE, MtrF, MtrG and MtrH.

The enzyme catalyses 5-methyl-5,6,7,8-tetrahydromethanopterin + coenzyme M + 2 Na(+)(in) = 5,6,7,8-tetrahydromethanopterin + methyl-coenzyme M + 2 Na(+)(out). Its pathway is one-carbon metabolism; methanogenesis from CO(2); methyl-coenzyme M from 5,10-methylene-5,6,7,8-tetrahydromethanopterin: step 2/2. Part of a complex that catalyzes the formation of methyl-coenzyme M and tetrahydromethanopterin from coenzyme M and methyl-tetrahydromethanopterin. This is an energy-conserving, sodium-ion translocating step. MtrH catalyzes the transfer of the methyl group from methyl-tetrahydromethanopterin to the corrinoid prosthetic group of MtrA. This Methanocaldococcus jannaschii (strain ATCC 43067 / DSM 2661 / JAL-1 / JCM 10045 / NBRC 100440) (Methanococcus jannaschii) protein is Tetrahydromethanopterin S-methyltransferase subunit H.